Consider the following 328-residue polypeptide: Ketol-acid reductoisomerase (NADP(+)) (328 aa).

Residues 2–182 (AKIYTDREAS…GATRAGVIET (181 aa)) form the KARI N-terminal Rossmann domain. NADP(+)-binding positions include 25–28 (YGIQ), R48, S53, and 83–86 (DMEQ). Residue H108 is part of the active site. G134 is a binding site for NADP(+). One can recognise a KARI C-terminal knotted domain in the interval 183 to 328 (TFAEETETDL…EEMRKLLFGP (146 aa)). Positions 191, 195, 227, and 231 each coordinate Mg(2+). S252 serves as a coordination point for substrate.

The protein belongs to the ketol-acid reductoisomerase family. Requires Mg(2+) as cofactor.

It carries out the reaction (2R)-2,3-dihydroxy-3-methylbutanoate + NADP(+) = (2S)-2-acetolactate + NADPH + H(+). It catalyses the reaction (2R,3R)-2,3-dihydroxy-3-methylpentanoate + NADP(+) = (S)-2-ethyl-2-hydroxy-3-oxobutanoate + NADPH + H(+). It functions in the pathway amino-acid biosynthesis; L-isoleucine biosynthesis; L-isoleucine from 2-oxobutanoate: step 2/4. Its pathway is amino-acid biosynthesis; L-valine biosynthesis; L-valine from pyruvate: step 2/4. In terms of biological role, involved in the biosynthesis of branched-chain amino acids (BCAA). Catalyzes an alkyl-migration followed by a ketol-acid reduction of (S)-2-acetolactate (S2AL) to yield (R)-2,3-dihydroxy-isovalerate. In the isomerase reaction, S2AL is rearranged via a Mg-dependent methyl migration to produce 3-hydroxy-3-methyl-2-ketobutyrate (HMKB). In the reductase reaction, this 2-ketoacid undergoes a metal-dependent reduction by NADPH to yield (R)-2,3-dihydroxy-isovalerate. The chain is Ketol-acid reductoisomerase (NADP(+)) from Pyrobaculum aerophilum (strain ATCC 51768 / DSM 7523 / JCM 9630 / CIP 104966 / NBRC 100827 / IM2).